The following is an 80-amino-acid chain: Exodeoxyribonuclease 7 small subunit (80 aa).

It belongs to the XseB family. As to quaternary structure, heterooligomer composed of large and small subunits.

The protein localises to the cytoplasm. It carries out the reaction Exonucleolytic cleavage in either 5'- to 3'- or 3'- to 5'-direction to yield nucleoside 5'-phosphates.. In terms of biological role, bidirectionally degrades single-stranded DNA into large acid-insoluble oligonucleotides, which are then degraded further into small acid-soluble oligonucleotides. The polypeptide is Exodeoxyribonuclease 7 small subunit (Rickettsia typhi (strain ATCC VR-144 / Wilmington)).